Here is a 118-residue protein sequence, read N- to C-terminus: UPF0148 protein LS215_1455 (118 aa).

It belongs to the UPF0148 family.

This is UPF0148 protein LS215_1455 from Saccharolobus islandicus (strain L.S.2.15 / Lassen #1) (Sulfolobus islandicus).